The primary structure comprises 473 residues: Glycine receptor subunit beta-type 4 (473 aa).

The N-terminal stretch at 1–19 (MHSLFLKILIYSLMQCVLG) is a signal peptide. Residues 20–249 (QAEFWDYDEN…EFHVDREITH (230 aa)) are Extracellular-facing. N-linked (GlcNAc...) asparagine glycosylation is found at asparagine 29, asparagine 105, and asparagine 151. An intrachain disulfide couples cysteine 166 to cysteine 180. A helical membrane pass occupies residues 250–271 (HIIQSYIPTSLIVIISWFSFWL). Residues 272–276 (DVEAV) are Cytoplasmic-facing. The chain crosses the membrane as a helical span at residues 277-297 (PGRVSLSITTLLTLATQSSAA). The Extracellular portion of the chain corresponds to 298 to 308 (RMALPQASDVK). The helical transmembrane segment at 309–329 (AIDVWMGTCMAFVFSAMIEFT) threads the bilayer. At 330 to 439 (VVNYCVRRKV…NRKNAQKIDR (110 aa)) the chain is on the cytoplasmic side. Residues 440 to 460 (YSRALFPLAFIIFNIFYWIYY) form a helical membrane-spanning segment. The Extracellular segment spans residues 461-473 (LKYAGSNSPELLL).

It belongs to the ligand-gated ion channel (TC 1.A.9) family. Glycine receptor (TC 1.A.9.3) subfamily. As to quaternary structure, pentamer.

The protein resides in the postsynaptic cell membrane. The protein localises to the synapse. It is found in the cell membrane. In terms of biological role, glycine receptors are ligand-gated chloride channels. Channel opening is triggered by extracellular glycine. Contributes to the generation of inhibitory postsynaptic currents. The protein is Glycine receptor subunit beta-type 4 of Caenorhabditis elegans.